Consider the following 34-residue polypeptide: Photosystem II reaction center protein Psb30 (34 aa).

Residues 6-26 (IVAQLLSLALVTLSGPAVIFL) traverse the membrane as a helical segment.

It belongs to the Psb30/Ycf12 family. In terms of assembly, PSII is composed of 1 copy each of membrane proteins PsbA, PsbB, PsbC, PsbD, PsbE, PsbF, PsbH, PsbI, PsbJ, PsbK, PsbL, PsbM, PsbT, PsbX, PsbY, PsbZ, Psb30/Ycf12, peripheral proteins of the oxygen-evolving complex and a large number of cofactors. It forms dimeric complexes.

Its subcellular location is the plastid. The protein localises to the chloroplast thylakoid membrane. Its function is as follows. A core subunit of photosystem II (PSII), probably helps stabilize the reaction center. This chain is Photosystem II reaction center protein Psb30, found in Emiliania huxleyi (Coccolithophore).